Reading from the N-terminus, the 201-residue chain is Probable nicotinate-nucleotide adenylyltransferase (201 aa).

It belongs to the NadD family.

The catalysed reaction is nicotinate beta-D-ribonucleotide + ATP + H(+) = deamido-NAD(+) + diphosphate. The protein operates within cofactor biosynthesis; NAD(+) biosynthesis; deamido-NAD(+) from nicotinate D-ribonucleotide: step 1/1. Catalyzes the reversible adenylation of nicotinate mononucleotide (NaMN) to nicotinic acid adenine dinucleotide (NaAD). In Clostridium botulinum (strain Langeland / NCTC 10281 / Type F), this protein is Probable nicotinate-nucleotide adenylyltransferase.